We begin with the raw amino-acid sequence, 402 residues long: Diaminopimelate decarboxylase (402 aa).

Lys45 carries the N6-(pyridoxal phosphate)lysine modification. Residues Gly224 and 259–262 (EPGR) each bind pyridoxal 5'-phosphate. Substrate contacts are provided by Arg262, Arg298, and Tyr302. Residue Cys327 is the Proton donor of the active site. Substrate contacts are provided by Glu328 and Tyr356. Tyr356 serves as a coordination point for pyridoxal 5'-phosphate.

This sequence belongs to the Orn/Lys/Arg decarboxylase class-II family. LysA subfamily. Homodimer. Pyridoxal 5'-phosphate serves as cofactor.

The enzyme catalyses meso-2,6-diaminopimelate + H(+) = L-lysine + CO2. It participates in amino-acid biosynthesis; L-lysine biosynthesis via DAP pathway; L-lysine from DL-2,6-diaminopimelate: step 1/1. Specifically catalyzes the decarboxylation of meso-diaminopimelate (meso-DAP) to L-lysine. The protein is Diaminopimelate decarboxylase of Campylobacter jejuni subsp. jejuni serotype O:2 (strain ATCC 700819 / NCTC 11168).